Reading from the N-terminus, the 679-residue chain is Biosynthetic arginine decarboxylase (679 aa).

The disordered stretch occupies residues 1 to 43 (MKHRGQEEMGVESTATSDEVVKVPANGNKLEGKNHKQKKLLPT). Position 149 is an N6-(pyridoxal phosphate)lysine (K149). 331–341 (LDVGGGLGVDY) contributes to the substrate binding site.

Belongs to the Orn/Lys/Arg decarboxylase class-II family. SpeA subfamily. It depends on Mg(2+) as a cofactor. Pyridoxal 5'-phosphate serves as cofactor.

It catalyses the reaction L-arginine + H(+) = agmatine + CO2. Its function is as follows. Catalyzes the biosynthesis of agmatine from arginine. In Nostoc sp. (strain PCC 7120 / SAG 25.82 / UTEX 2576), this protein is Biosynthetic arginine decarboxylase.